The chain runs to 351 residues: 4-hydroxy-3-methylbut-2-enyl diphosphate reductase (351 aa).

Cysteine 18 contacts [4Fe-4S] cluster. Positions 47 and 83 each coordinate (2E)-4-hydroxy-3-methylbut-2-enyl diphosphate. 2 residues coordinate dimethylallyl diphosphate: histidine 47 and histidine 83. Residues histidine 47 and histidine 83 each contribute to the isopentenyl diphosphate site. [4Fe-4S] cluster is bound at residue cysteine 105. Histidine 133 contacts (2E)-4-hydroxy-3-methylbut-2-enyl diphosphate. Histidine 133 contributes to the dimethylallyl diphosphate binding site. An isopentenyl diphosphate-binding site is contributed by histidine 133. Residue glutamate 135 is the Proton donor of the active site. (2E)-4-hydroxy-3-methylbut-2-enyl diphosphate is bound at residue threonine 174. Cysteine 204 lines the [4Fe-4S] cluster pocket. The (2E)-4-hydroxy-3-methylbut-2-enyl diphosphate site is built by serine 232, serine 233, asparagine 234, and serine 277. Dimethylallyl diphosphate-binding residues include serine 232, serine 233, asparagine 234, and serine 277. 4 residues coordinate isopentenyl diphosphate: serine 232, serine 233, asparagine 234, and serine 277.

The protein belongs to the IspH family. The cofactor is [4Fe-4S] cluster.

It catalyses the reaction isopentenyl diphosphate + 2 oxidized [2Fe-2S]-[ferredoxin] + H2O = (2E)-4-hydroxy-3-methylbut-2-enyl diphosphate + 2 reduced [2Fe-2S]-[ferredoxin] + 2 H(+). It carries out the reaction dimethylallyl diphosphate + 2 oxidized [2Fe-2S]-[ferredoxin] + H2O = (2E)-4-hydroxy-3-methylbut-2-enyl diphosphate + 2 reduced [2Fe-2S]-[ferredoxin] + 2 H(+). Its pathway is isoprenoid biosynthesis; dimethylallyl diphosphate biosynthesis; dimethylallyl diphosphate from (2E)-4-hydroxy-3-methylbutenyl diphosphate: step 1/1. The protein operates within isoprenoid biosynthesis; isopentenyl diphosphate biosynthesis via DXP pathway; isopentenyl diphosphate from 1-deoxy-D-xylulose 5-phosphate: step 6/6. Catalyzes the conversion of 1-hydroxy-2-methyl-2-(E)-butenyl 4-diphosphate (HMBPP) into a mixture of isopentenyl diphosphate (IPP) and dimethylallyl diphosphate (DMAPP). Acts in the terminal step of the DOXP/MEP pathway for isoprenoid precursor biosynthesis. The sequence is that of 4-hydroxy-3-methylbut-2-enyl diphosphate reductase from Bartonella tribocorum (strain CIP 105476 / IBS 506).